A 129-amino-acid polypeptide reads, in one-letter code: Small ribosomal subunit protein uS11 (129 aa).

It belongs to the universal ribosomal protein uS11 family. Part of the 30S ribosomal subunit. Interacts with proteins S7 and S18. Binds to IF-3.

Located on the platform of the 30S subunit, it bridges several disparate RNA helices of the 16S rRNA. Forms part of the Shine-Dalgarno cleft in the 70S ribosome. The protein is Small ribosomal subunit protein uS11 of Salmonella typhi.